A 567-amino-acid polypeptide reads, in one-letter code: Urease subunit alpha (567 aa).

In terms of domain architecture, Urease spans 129–567; it reads GGIDAHIHFI…LPLTQRYCLF (439 aa). 3 residues coordinate Ni(2+): His134, His136, and Lys217. N6-carboxylysine is present on Lys217. A substrate-binding site is contributed by His219. His246 and His272 together coordinate Ni(2+). The active-site Proton donor is the His320. Position 360 (Asp360) interacts with Ni(2+).

Belongs to the metallo-dependent hydrolases superfamily. Urease alpha subunit family. As to quaternary structure, heterotrimer of UreA (gamma), UreB (beta) and UreC (alpha) subunits. Three heterotrimers associate to form the active enzyme. Ni cation is required as a cofactor. In terms of processing, carboxylation allows a single lysine to coordinate two nickel ions.

Its subcellular location is the cytoplasm. It carries out the reaction urea + 2 H2O + H(+) = hydrogencarbonate + 2 NH4(+). Its pathway is nitrogen metabolism; urea degradation; CO(2) and NH(3) from urea (urease route): step 1/1. The chain is Urease subunit alpha from Psychromonas ingrahamii (strain DSM 17664 / CCUG 51855 / 37).